The sequence spans 63 residues: Large ribosomal subunit protein uL30 (63 aa).

Belongs to the universal ribosomal protein uL30 family. Part of the 50S ribosomal subunit.

The sequence is that of Large ribosomal subunit protein uL30 from Xanthomonas axonopodis pv. citri (strain 306).